Consider the following 256-residue polypeptide: Imidazole glycerol phosphate synthase subunit HisF (256 aa).

Catalysis depends on residues aspartate 12 and aspartate 131.

Belongs to the HisA/HisF family. In terms of assembly, heterodimer of HisH and HisF.

It localises to the cytoplasm. The enzyme catalyses 5-[(5-phospho-1-deoxy-D-ribulos-1-ylimino)methylamino]-1-(5-phospho-beta-D-ribosyl)imidazole-4-carboxamide + L-glutamine = D-erythro-1-(imidazol-4-yl)glycerol 3-phosphate + 5-amino-1-(5-phospho-beta-D-ribosyl)imidazole-4-carboxamide + L-glutamate + H(+). It functions in the pathway amino-acid biosynthesis; L-histidine biosynthesis; L-histidine from 5-phospho-alpha-D-ribose 1-diphosphate: step 5/9. In terms of biological role, IGPS catalyzes the conversion of PRFAR and glutamine to IGP, AICAR and glutamate. The HisF subunit catalyzes the cyclization activity that produces IGP and AICAR from PRFAR using the ammonia provided by the HisH subunit. The protein is Imidazole glycerol phosphate synthase subunit HisF of Beutenbergia cavernae (strain ATCC BAA-8 / DSM 12333 / CCUG 43141 / JCM 11478 / NBRC 16432 / NCIMB 13614 / HKI 0122).